A 587-amino-acid polypeptide reads, in one-letter code: Protein cereblon (587 aa).

3 disordered regions span residues 1 to 56, 78 to 113, and 157 to 195; these read MDEE…PAEY, DVLQ…GLPN, and FSQE…IDIG. Composition is skewed to polar residues over residues 22 to 31 and 86 to 96; these read EDQSQSQGLQ and SEGSHPSSDMS. The span at 159–168 shows a compositional bias: basic and acidic residues; sequence QERRRSRTSE. The segment covering 170 to 181 has biased composition (acidic residues); sequence TSQEEAAEEPDD. Over residues 182-191 the composition is skewed to pro residues; the sequence is PPPQQPPLPP. Positions 227 to 453 constitute a Lon N-terminal domain; it reads HMLIFLHHHI…LIKSTFKDET (227 aa). Positions 452–561 constitute a CULT domain; it reads ETLFFCRYCN…LSGSSVRIGK (110 aa). Residues C457, C460, C526, and C529 each contribute to the Zn(2+) site.

This sequence belongs to the CRBN family. As to quaternary structure, likely a component of a DCX (DDB1-CUL4-X-box) protein ligase complex. May interact with pic/DDB1. Ubiquitinated.

The protein localises to the nucleus. Its pathway is protein modification; protein ubiquitination. Its function is as follows. Substrate recognition component of a DCX (DDB1-CUL4-X-box) E3 protein ligase complex that mediates the ubiquitination and subsequent proteasomal degradation of target proteins. Has an essential role in mediating growth by negatively regulating insulin signaling. It also has a role in maintaining presynaptic function in the neuromuscular junction synapses of third-instar larvae. This Drosophila simulans (Fruit fly) protein is Protein cereblon.